The chain runs to 360 residues: 1-deoxy-D-xylulose 5-phosphate reductoisomerase (360 aa).

NADPH contacts are provided by Ser-7, Gly-8, Ser-9, Ile-10, and Asn-115. 1-deoxy-D-xylulose 5-phosphate is bound at residue Lys-116. Position 117 (Glu-117) interacts with NADPH. A Mn(2+)-binding site is contributed by Asp-135. 1-deoxy-D-xylulose 5-phosphate contacts are provided by Ser-136, Glu-137, Ser-159, and His-182. Glu-137 is a binding site for Mn(2+). Residue Gly-188 coordinates NADPH. Ser-195, Asn-200, Lys-201, and Glu-204 together coordinate 1-deoxy-D-xylulose 5-phosphate. Residue Glu-204 participates in Mn(2+) binding.

The protein belongs to the DXR family. Mg(2+) is required as a cofactor. Mn(2+) serves as cofactor.

It carries out the reaction 2-C-methyl-D-erythritol 4-phosphate + NADP(+) = 1-deoxy-D-xylulose 5-phosphate + NADPH + H(+). Its pathway is isoprenoid biosynthesis; isopentenyl diphosphate biosynthesis via DXP pathway; isopentenyl diphosphate from 1-deoxy-D-xylulose 5-phosphate: step 1/6. In terms of biological role, catalyzes the NADPH-dependent rearrangement and reduction of 1-deoxy-D-xylulose-5-phosphate (DXP) to 2-C-methyl-D-erythritol 4-phosphate (MEP). In Campylobacter fetus subsp. fetus (strain 82-40), this protein is 1-deoxy-D-xylulose 5-phosphate reductoisomerase.